Here is a 155-residue protein sequence, read N- to C-terminus: Archaemetzincin (155 aa).

Histidine 109 contributes to the Zn(2+) binding site. Residue glutamate 110 is the Proton acceptor of the active site. Histidine 113, histidine 119, cysteine 120, cysteine 125, cysteine 144, and cysteine 147 together coordinate Zn(2+).

It belongs to the peptidase M54 family. As to quaternary structure, monomer. The cofactor is Zn(2+).

Its function is as follows. Probable zinc metalloprotease whose natural substrate is unknown. The sequence is that of Archaemetzincin from Pyrobaculum aerophilum (strain ATCC 51768 / DSM 7523 / JCM 9630 / CIP 104966 / NBRC 100827 / IM2).